Consider the following 78-residue polypeptide: MKAVVDAAGRIVVPKPLREALGLQPGSTVEISRYGAGLHLIPTGRTARLEEENGVLVATGETTIDDEVVFGLIDSGRK.

A SpoVT-AbrB domain is found at 1 to 45 (MKAVVDAAGRIVVPKPLREALGLQPGSTVEISRYGAGLHLIPTGR).

It belongs to the VapB family. In terms of assembly, interacts with cognate toxin VapC27 and non-cognate toxins MazF6 and VapC40. Interaction with MazF6 and MazF9 partially neutralizes the toxins.

In terms of biological role, antitoxin component of a type II toxin-antitoxin (TA) system. Cognate toxin is VapC27. Upon expression in E.coli partially counteracts the ribonuclease activity of non-cognate toxins MazF6 and MazF9. The protein is Antitoxin VapB27 (vapB27) of Mycobacterium tuberculosis (strain ATCC 25618 / H37Rv).